The sequence spans 124 residues: uncharacterized protein (124 aa).

The N-terminal stretch at 1–22 (MGTSSVLLMIASSLILLEVVMT) is a signal peptide.

This is an uncharacterized protein from Caenorhabditis elegans.